A 722-amino-acid chain; its full sequence is BTB/POZ domain-containing protein 9 (722 aa).

Positions Ala46–Thr112 constitute a BTB domain. One can recognise a BACK domain in the interval Cys151–Val247. Positions Gln565–Asp593 form a coiled coil. Over residues Glu577–Asp594 the composition is skewed to basic and acidic residues. Disordered regions lie at residues Glu577–Ser626 and Pro640–Leu722. Over residues Ile597–Ala606 the composition is skewed to polar residues. A compositionally biased stretch (low complexity) spans Ser607 to Ser626. A compositionally biased stretch (pro residues) spans Leu641 to Leu658. Over residues Glu670–Ala679 the composition is skewed to polar residues. Residues Ser686–Ser704 are compositionally biased toward low complexity.

As to expression, detected in the brain (at protein level).

It localises to the cytoplasm. Its function is as follows. Essential for the homeostatic regulation of sleep and motor activity, by depressing hyperactivity and wakefulness. May function, at least in part, by ensuring dopamine biosynthesis. The protein is BTB/POZ domain-containing protein 9 of Drosophila melanogaster (Fruit fly).